Reading from the N-terminus, the 412-residue chain is Phosphoglycerate kinase (412 aa).

Substrate contacts are provided by residues 26-28 (DFN), Arg42, 65-68 (HLGR), Arg133, and Arg166. ATP is bound by residues Lys217, Gly308, Glu339, and 368–371 (GGDS).

This sequence belongs to the phosphoglycerate kinase family. Monomer.

Its subcellular location is the cytoplasm. The catalysed reaction is (2R)-3-phosphoglycerate + ATP = (2R)-3-phospho-glyceroyl phosphate + ADP. The protein operates within carbohydrate degradation; glycolysis; pyruvate from D-glyceraldehyde 3-phosphate: step 2/5. The polypeptide is Phosphoglycerate kinase (Synechococcus sp. (strain JA-3-3Ab) (Cyanobacteria bacterium Yellowstone A-Prime)).